The following is a 515-amino-acid chain: MTKTYKYEDQLHFIQKSDDVKNLFIIKKGFVPNMNVEGHLFANDNLSKLLFDELKQFTDDPGSFLPALKQLANVAALPGIVKSSIALPDAHSGYGFSIGNVAAFDMDNCNSIVSPGGVGFDINCGVRLLRTNLLYKDIEPIKEQLVQKLFDLIPVGVGCQGKIPCDYGDLDNILEYGMDWSVCSGYSWAEDKEHCEDFGRMIQADPTVVSYRAKKRGLSQIGTLGAGNHYGEVQVSIYSNIYVVEEIYDEYSAKVMGIDRIGQVCIMTHSGSRGLGHQVASDALVDMENSLNKSKIKVNDKQLACARINSDEGKKYLKGMAAASNYAWVNRSVMTHLTRKAFEEVLKESADDLDMHVVYDVSHNIAKIEDHMVDGKLKRLLLHRKGSTRAFPPYHPLISADFQHIGQPVLVGGTMGTCSYVLTGTQLAMDLTLGSTCHGSGRTLSRNKSRRVLDYNEVLNNLKEKGISIRVASPKLVTEEAPESYKDVSEVVQTCHDSGISKKCVKLRPVAVIKG.

Mn(2+) is bound by residues aspartate 121, cysteine 124, histidine 229, histidine 269, and histidine 363. Position 228–232 (228–232 (NHYGE)) interacts with GMP. GMP-binding positions include 363-364 (HN), 412-415 (GGTM), serine 419, 438-441 (HGSG), and lysine 514. Histidine 438 serves as the catalytic GMP-histidine intermediate.

This sequence belongs to the RtcB family. In terms of assembly, catalytic component of the tRNA-splicing ligase complex. Mn(2+) is required as a cofactor.

The enzyme catalyses a 3'-end 3'-phospho-ribonucleotide-RNA + a 5'-end dephospho-ribonucleoside-RNA + GTP = a ribonucleotidyl-ribonucleotide-RNA + GMP + diphosphate. It carries out the reaction a 3'-end 2',3'-cyclophospho-ribonucleotide-RNA + a 5'-end dephospho-ribonucleoside-RNA + GTP + H2O = a ribonucleotidyl-ribonucleotide-RNA + GMP + diphosphate + H(+). In terms of biological role, catalytic subunit of the tRNA-splicing ligase complex that acts by directly joining spliced tRNA halves to mature-sized tRNAs by incorporating the precursor-derived splice junction phosphate into the mature tRNA as a canonical 3',5'-phosphodiester. May act as an RNA ligase with broad substrate specificity, and may function toward other RNAs. This Theileria annulata protein is RNA-splicing ligase RtcB homolog.